The chain runs to 881 residues: MTEKNNSSSIEEKYQERTANLRKTKRISPFWLLPFIALCIGAILFFQIVKERGTSITITFTNGSGIVADKTQIRYQGLQIGIVKEVHFTDNLQKVEVVANINPEASSILRENTKFWLVQPNVSLAGISGLDSLVSGNYITLQPGDGDREDEFIAEEQGPIAQVSAGDLLIHLISDDLGSISIGASVYFKKLPVGKIYDYRINKNNKVEIDVVIDKAYAKFVKKDSRFWNISGINANISPSGLNLNVESLNAVVQGAVSFDSPADSPKADENSHFTLYTNLKAAKRGIEIKVTIPASSALIAGQTEVYSQDNAIGILAKLSAVENNDEILEGSLLIDPNQASLFKANSKIVLRNKKIDLGNLAEPKKFFRGEYFDVIAGDGETKHQFNVIKENELLLNAPNTLVLTLTAPENYGVSEGQNVFYNNMIIGQIVSQTIDVNGVQFKAAIASEYRNLIHENTQFVAATNFDISVGLDGLRFESATPEKWLQGGVRVLTKQGLGKAKDSYPLYQNISNAEHGITGNILTPTITLHTQTLPSIDKGSLVLYRQFEVGKILSIKPKTNNFDVDIYIYPAYQHLLTDKSRFWVESAAKIDVSPKGISIQATPLARSLKGAISFDNGGSGNNRTLYANESYAKSIGFVITLITDDATNLSKGMNLRYLGLDVGQIDSIQLDAKAKRITAKALINPNYMNIIAKEGANFTIISPQISAGGIDNLDSLLQPYIDIEIGNGNTKTQFNLAQTAPQRNKFSNGTPFILETRDAMNLSEGSPILYRGVEVGTVKKFELNSLGDRVLVHIAIMPKYSHLVRQNTEFWIASGYDFSLGWKGAVFNTGSVQQLLKGGISFSTPAEKEIQPQAQPNKRFLLQINRPEEVQTWGSGALSK.

The chain crosses the membrane as a helical span at residues Phe30 to Val49.

The protein belongs to the PqiB family.

The protein resides in the cell inner membrane. The polypeptide is Probable intermembrane transport protein HI_1672 (Haemophilus influenzae (strain ATCC 51907 / DSM 11121 / KW20 / Rd)).